Reading from the N-terminus, the 155-residue chain is 6,7-dimethyl-8-ribityllumazine synthase (155 aa).

Residues Tyr-23, 57–59 (AWE), and 81–83 (CVI) each bind 5-amino-6-(D-ribitylamino)uracil. 86 to 87 (ET) contacts (2S)-2-hydroxy-3-oxobutyl phosphate. His-89 serves as the catalytic Proton donor. Phe-114 serves as a coordination point for 5-amino-6-(D-ribitylamino)uracil. (2S)-2-hydroxy-3-oxobutyl phosphate is bound at residue Arg-128.

It belongs to the DMRL synthase family.

It catalyses the reaction (2S)-2-hydroxy-3-oxobutyl phosphate + 5-amino-6-(D-ribitylamino)uracil = 6,7-dimethyl-8-(1-D-ribityl)lumazine + phosphate + 2 H2O + H(+). The protein operates within cofactor biosynthesis; riboflavin biosynthesis; riboflavin from 2-hydroxy-3-oxobutyl phosphate and 5-amino-6-(D-ribitylamino)uracil: step 1/2. Its function is as follows. Catalyzes the formation of 6,7-dimethyl-8-ribityllumazine by condensation of 5-amino-6-(D-ribitylamino)uracil with 3,4-dihydroxy-2-butanone 4-phosphate. This is the penultimate step in the biosynthesis of riboflavin. This Rhodopirellula baltica (strain DSM 10527 / NCIMB 13988 / SH1) protein is 6,7-dimethyl-8-ribityllumazine synthase.